Reading from the N-terminus, the 136-residue chain is Putative zinc finger protein 818 (136 aa).

A C2H2-type 1; degenerate zinc finger spans residues 64 to 83 (NVCGKVLSQNSHLVNHQRIH). A C2H2-type 2 zinc finger spans residues 89-111 (YRCHECGKAFTQGSRFINHQIVH).

It belongs to the krueppel C2H2-type zinc-finger protein family.

Its subcellular location is the nucleus. Functionally, may be involved in transcriptional regulation. This Homo sapiens (Human) protein is Putative zinc finger protein 818 (ZNF818P).